We begin with the raw amino-acid sequence, 173 residues long: uncharacterized protein (173 aa).

In terms of domain architecture, N-acetyltransferase spans Val-4 to Val-173. Acetyl-CoA-binding positions include Ile-97 to Leu-99, Arg-106 to Lys-110, and Asn-136 to Asn-138.

This is an uncharacterized protein from Lactobacillus delbrueckii subsp. lactis.